The primary structure comprises 88 residues: DNA-directed RNA polymerase subunit omega (88 aa).

It belongs to the RNA polymerase subunit omega family. As to quaternary structure, the RNAP catalytic core consists of 2 alpha, 1 beta, 1 beta' and 1 omega subunit. When a sigma factor is associated with the core the holoenzyme is formed, which can initiate transcription.

The catalysed reaction is RNA(n) + a ribonucleoside 5'-triphosphate = RNA(n+1) + diphosphate. Promotes RNA polymerase assembly. Latches the N- and C-terminal regions of the beta' subunit thereby facilitating its interaction with the beta and alpha subunits. The polypeptide is DNA-directed RNA polymerase subunit omega (Clostridioides difficile (strain 630) (Peptoclostridium difficile)).